We begin with the raw amino-acid sequence, 261 residues long: Aminoglycoside N(3)-acetyltransferase IV (261 aa).

It belongs to the antibiotic N-acetyltransferase family.

It carries out the reaction a 2-deoxystreptamine antibiotic + acetyl-CoA = an N(3)-acetyl-2-deoxystreptamine antibiotic + CoA + H(+). Its function is as follows. Resistance to antibiotics containing the 2-deoxy-streptamine ring including gentamicin, kanamycin, tobramycin, neomycin and apramycin. This is Aminoglycoside N(3)-acetyltransferase IV (aacC4) from Salmonella sp.